The sequence spans 232 residues: Ovalbumin-related protein X (232 aa).

The protein belongs to the serpin family. Ov-serpin subfamily. Expressed in egg white (at protein level).

The protein is Ovalbumin-related protein X (SERPINB14C) of Gallus gallus (Chicken).